Consider the following 162-residue polypeptide: Ribosome maturation factor RimM (162 aa).

One can recognise a PRC barrel domain in the interval 90–161 (EDCYYEADIV…KIIIKPLEVW (72 aa)).

This sequence belongs to the RimM family. As to quaternary structure, binds ribosomal protein uS19.

It is found in the cytoplasm. In terms of biological role, an accessory protein needed during the final step in the assembly of 30S ribosomal subunit, possibly for assembly of the head region. Essential for efficient processing of 16S rRNA. May be needed both before and after RbfA during the maturation of 16S rRNA. It has affinity for free ribosomal 30S subunits but not for 70S ribosomes. The protein is Ribosome maturation factor RimM of Clostridium novyi (strain NT).